The sequence spans 352 residues: Phenylalanine--tRNA ligase alpha subunit (352 aa).

Glu-258 serves as a coordination point for Mg(2+).

The protein belongs to the class-II aminoacyl-tRNA synthetase family. Phe-tRNA synthetase alpha subunit type 1 subfamily. Tetramer of two alpha and two beta subunits. The cofactor is Mg(2+).

Its subcellular location is the cytoplasm. It catalyses the reaction tRNA(Phe) + L-phenylalanine + ATP = L-phenylalanyl-tRNA(Phe) + AMP + diphosphate + H(+). This is Phenylalanine--tRNA ligase alpha subunit from Staphylococcus epidermidis (strain ATCC 35984 / DSM 28319 / BCRC 17069 / CCUG 31568 / BM 3577 / RP62A).